The chain runs to 295 residues: Cutinase 11 (295 aa).

The first 17 residues, 1 to 17, serve as a signal peptide directing secretion; sequence MQTSALLLAAQALVASA. C25 and C102 are joined by a disulfide. Residues S113, D198, and H210 contribute to the active site. A disulfide bond links C184 and C202. Residues 228 to 258 form a disordered region; sequence KLNSGGSPPTTPPTTPPTTPPTTPPTTPPPS. Positions 236-258 are enriched in pro residues; sequence PTTPPTTPPTTPPTTPPTTPPPS. One can recognise a CBM1 domain in the interval 260 to 295; the sequence is SCAALYGQCGGQGWNGATCCSQGTCRASNQWYSQCL.

It belongs to the cutinase family. The 2 disulfide bonds play a critical role in holding the catalytic residues in juxta-position; reduction of the disulfide bridges results in the complete inactivation of the enzyme.

The protein localises to the secreted. It carries out the reaction cutin + H2O = cutin monomers.. In terms of biological role, catalyzes the hydrolysis of complex carboxylic polyesters found in the cell wall of plants. May degrade cutin, a macromolecule that forms the structure of the plant cuticle. May also degrade suberin, a specialized macromolecule found in the cell wall of various plant tissues. Allows pathogenic fungi to penetrate through the cuticular barrier into the host plant during the initial stage of fungal infection. Involved in pathogenesis. The sequence is that of Cutinase 11 from Verticillium dahliae (Verticillium wilt).